A 358-amino-acid polypeptide reads, in one-letter code: Histidinol-phosphate aminotransferase (358 aa).

Lysine 217 bears the N6-(pyridoxal phosphate)lysine mark.

Belongs to the class-II pyridoxal-phosphate-dependent aminotransferase family. Histidinol-phosphate aminotransferase subfamily. As to quaternary structure, homodimer. The cofactor is pyridoxal 5'-phosphate.

It carries out the reaction L-histidinol phosphate + 2-oxoglutarate = 3-(imidazol-4-yl)-2-oxopropyl phosphate + L-glutamate. It functions in the pathway amino-acid biosynthesis; L-histidine biosynthesis; L-histidine from 5-phospho-alpha-D-ribose 1-diphosphate: step 7/9. The protein is Histidinol-phosphate aminotransferase of Ruminiclostridium cellulolyticum (strain ATCC 35319 / DSM 5812 / JCM 6584 / H10) (Clostridium cellulolyticum).